A 353-amino-acid polypeptide reads, in one-letter code: Photosystem II protein D1 (353 aa).

T2 is modified (N-acetylthreonine). Phosphothreonine is present on T2. Helical transmembrane passes span Y29–S46, H118–L133, and W142–A156. H118 contributes to the chlorophyll a binding site. Y126 serves as a coordination point for pheophytin a. D170 and E189 together coordinate [CaMn4O5] cluster. Residues F197–L218 traverse the membrane as a helical segment. A chlorophyll a-binding site is contributed by H198. A quinone-binding positions include H215 and S264–F265. H215 contributes to the Fe cation binding site. Residue H272 participates in Fe cation binding. A helical transmembrane segment spans residues F274–L288. [CaMn4O5] cluster contacts are provided by H332, E333, D342, and A344. Positions V345–G353 are excised as a propeptide.

This sequence belongs to the reaction center PufL/M/PsbA/D family. As to quaternary structure, PSII is composed of 1 copy each of membrane proteins PsbA, PsbB, PsbC, PsbD, PsbE, PsbF, PsbH, PsbI, PsbJ, PsbK, PsbL, PsbM, PsbT, PsbX, PsbY, PsbZ, Psb30/Ycf12, at least 3 peripheral proteins of the oxygen-evolving complex and a large number of cofactors. It forms dimeric complexes. It depends on The D1/D2 heterodimer binds P680, chlorophylls that are the primary electron donor of PSII, and subsequent electron acceptors. It shares a non-heme iron and each subunit binds pheophytin, quinone, additional chlorophylls, carotenoids and lipids. D1 provides most of the ligands for the Mn4-Ca-O5 cluster of the oxygen-evolving complex (OEC). There is also a Cl(-1) ion associated with D1 and D2, which is required for oxygen evolution. The PSII complex binds additional chlorophylls, carotenoids and specific lipids. as a cofactor. Tyr-161 forms a radical intermediate that is referred to as redox-active TyrZ, YZ or Y-Z. Post-translationally, C-terminally processed by CTPA; processing is essential to allow assembly of the oxygen-evolving complex and thus photosynthetic growth.

Its subcellular location is the plastid. The protein resides in the chloroplast thylakoid membrane. It catalyses the reaction 2 a plastoquinone + 4 hnu + 2 H2O = 2 a plastoquinol + O2. Its function is as follows. Photosystem II (PSII) is a light-driven water:plastoquinone oxidoreductase that uses light energy to abstract electrons from H(2)O, generating O(2) and a proton gradient subsequently used for ATP formation. It consists of a core antenna complex that captures photons, and an electron transfer chain that converts photonic excitation into a charge separation. The D1/D2 (PsbA/PsbD) reaction center heterodimer binds P680, the primary electron donor of PSII as well as several subsequent electron acceptors. This chain is Photosystem II protein D1, found in Chlorella vulgaris (Green alga).